The chain runs to 590 residues: Shugoshin (590 aa).

A disordered region spans residues 1–20 (MPKRKIAPNKESSRRTVSHD). Residues 11 to 20 (ESSRRTVSHD) are compositionally biased toward basic and acidic residues. The stretch at 25–86 (QIQEFQNLMD…QENVTLRSKT (62 aa)) forms a coiled coil. Disordered regions lie at residues 133 to 235 (LRTM…QVEE), 291 to 337 (PSNP…HSMK), and 411 to 550 (RNRE…NSNI). Positions 173–185 (SFNKDDGPDLEPK) are enriched in basic and acidic residues. Positions 302–326 (PSATLPTTTSDASTVYPSSSSSTNS) are enriched in low complexity. A compositionally biased stretch (basic residues) spans 328–337 (PKTKIKHSMK). The span at 448–459 (KKTEDEIHEDTA) shows a compositional bias: basic and acidic residues. The span at 513-526 (IVNNLSDENSTTRP) shows a compositional bias: polar residues. Residues 527 to 550 (SKSSKGTSNNNNNYNNFDNNNSNI) show a composition bias toward low complexity.

This sequence belongs to the shugoshin family. In terms of processing, ubiquitinated by the anaphase promoting complex (APC) at the onset of anaphase, conducting to its degradation.

It is found in the chromosome. Its subcellular location is the centromere. The protein localises to the kinetochore. The protein resides in the cytoplasm. It localises to the cytoskeleton. It is found in the spindle pole. Its function is as follows. Plays a central role in chromosome cohesion during mitosis and meiosis divisions by preventing premature dissociation of cohesin complex from centromeres after prophase, when most of cohesin complex dissociates from chromosomes arms. Probably act by protecting REC8 and RAD21 from separase degradation during anaphase. Also acts as a spindle checkpoint component required for sensing tension between sister chromatids during mitosis, its degradation when they separate preventing cell cycle arrest and chromosome loss in anaphase, a time when sister chromatids are no longer under tension. The chain is Shugoshin (SGO1) from Saccharomyces cerevisiae (strain ATCC 204508 / S288c) (Baker's yeast).